The primary structure comprises 166 residues: Large ribosomal subunit protein uL10 (166 aa).

Belongs to the universal ribosomal protein uL10 family. In terms of assembly, part of the ribosomal stalk of the 50S ribosomal subunit. The N-terminus interacts with L11 and the large rRNA to form the base of the stalk. The C-terminus forms an elongated spine to which L12 dimers bind in a sequential fashion forming a multimeric L10(L12)X complex.

Functionally, forms part of the ribosomal stalk, playing a central role in the interaction of the ribosome with GTP-bound translation factors. The sequence is that of Large ribosomal subunit protein uL10 from Pseudomonas fluorescens (strain Pf0-1).